The chain runs to 400 residues: Small ribosomal subunit protein bS1 (400 aa).

4 consecutive S1 motif domains span residues 17 to 87 (GDVV…VTYL), 107 to 173 (EEVV…LSRR), 194 to 262 (GDVV…LSLK), and 279 to 348 (GDVV…LSIK). The span at 351–366 (EERPAQEEGQKEEKRA) shows a compositional bias: basic and acidic residues. The interval 351-400 (EERPAQEEGQKEEKRAARPRRPRRQEKRDFELPETQTGFSMADLFGDIEL) is disordered.

Belongs to the bacterial ribosomal protein bS1 family. Phosphorylated.

In terms of biological role, binds mRNA; thus facilitating recognition of the initiation point. It is needed to translate mRNA with a short Shine-Dalgarno (SD) purine-rich sequence. The chain is Small ribosomal subunit protein bS1 (rpsA) from Streptococcus pneumoniae (strain ATCC BAA-255 / R6).